A 478-amino-acid polypeptide reads, in one-letter code: Cytochrome c-552 (478 aa).

Residues 1-27 (MKKQWTRRSAAAIAMVTTLLLSSHSFA) form the signal peptide. Histidine 91 lines the heme c pocket. Residues cysteine 119, cysteine 122, and lysine 123 each coordinate heme. The heme c site is built by cysteine 157, cysteine 160, histidine 161, cysteine 206, cysteine 209, and histidine 210. Ca(2+) is bound by residues glutamate 212, tyrosine 213, lysine 258, and glutamine 260. Residue tyrosine 213 participates in substrate binding. Residue histidine 261 participates in substrate binding. The heme c site is built by histidine 272, cysteine 279, cysteine 282, histidine 283, histidine 298, cysteine 311, cysteine 314, histidine 315, and histidine 390.

This sequence belongs to the cytochrome c-552 family. The cofactor is Ca(2+). Heme c is required as a cofactor.

The protein localises to the periplasm. The catalysed reaction is 6 Fe(III)-[cytochrome c] + NH4(+) + 2 H2O = 6 Fe(II)-[cytochrome c] + nitrite + 8 H(+). It participates in nitrogen metabolism; nitrate reduction (assimilation). Its function is as follows. Catalyzes the reduction of nitrite to ammonia, consuming six electrons in the process. This chain is Cytochrome c-552, found in Aliivibrio fischeri (strain ATCC 700601 / ES114) (Vibrio fischeri).